The chain runs to 298 residues: GTPase Era (298 aa).

The region spanning 4-171 (KSGFVSVIGR…LKEALDYIPE (168 aa)) is the Era-type G domain. The segment at 12-19 (GRPNVGKS) is G1. 12 to 19 (GRPNVGKS) is a GTP binding site. The segment at 38-42 (QTTRN) is G2. The tract at residues 59–62 (DTPG) is G3. Residues 59 to 63 (DTPGI) and 121 to 124 (NKVD) each bind GTP. The interval 121 to 124 (NKVD) is G4. Residues 150-152 (ISA) are G5. The region spanning 202–279 (LDDEVPHGVG…FLELWVKVKP (78 aa)) is the KH type-2 domain.

This sequence belongs to the TRAFAC class TrmE-Era-EngA-EngB-Septin-like GTPase superfamily. Era GTPase family. In terms of assembly, monomer.

The protein resides in the cytoplasm. It is found in the cell membrane. An essential GTPase that binds both GDP and GTP, with rapid nucleotide exchange. Plays a role in 16S rRNA processing and 30S ribosomal subunit biogenesis and possibly also in cell cycle regulation and energy metabolism. The chain is GTPase Era from Ruminiclostridium cellulolyticum (strain ATCC 35319 / DSM 5812 / JCM 6584 / H10) (Clostridium cellulolyticum).